Consider the following 89-residue polypeptide: uncharacterized protein (89 aa).

This is an uncharacterized protein from Mycobacterium bovis (strain ATCC BAA-935 / AF2122/97).